A 121-amino-acid chain; its full sequence is Large ribosomal subunit protein bL12 (121 aa).

Belongs to the bacterial ribosomal protein bL12 family. Homodimer. Part of the ribosomal stalk of the 50S ribosomal subunit. Forms a multimeric L10(L12)X complex, where L10 forms an elongated spine to which 2 to 4 L12 dimers bind in a sequential fashion. Binds GTP-bound translation factors.

Forms part of the ribosomal stalk which helps the ribosome interact with GTP-bound translation factors. Is thus essential for accurate translation. The sequence is that of Large ribosomal subunit protein bL12 from Vibrio atlanticus (strain LGP32) (Vibrio splendidus (strain Mel32)).